The following is a 433-amino-acid chain: ATP-dependent protease ATPase subunit HslU (433 aa).

Residues V18, G60–E65, D246, E311, and R383 each bind ATP.

Belongs to the ClpX chaperone family. HslU subfamily. In terms of assembly, a double ring-shaped homohexamer of HslV is capped on each side by a ring-shaped HslU homohexamer. The assembly of the HslU/HslV complex is dependent on binding of ATP.

The protein resides in the cytoplasm. Its function is as follows. ATPase subunit of a proteasome-like degradation complex; this subunit has chaperone activity. The binding of ATP and its subsequent hydrolysis by HslU are essential for unfolding of protein substrates subsequently hydrolyzed by HslV. HslU recognizes the N-terminal part of its protein substrates and unfolds these before they are guided to HslV for hydrolysis. The polypeptide is ATP-dependent protease ATPase subunit HslU (Nitrobacter hamburgensis (strain DSM 10229 / NCIMB 13809 / X14)).